The chain runs to 125 residues: Holo-[acyl-carrier-protein] synthase (125 aa).

Mg(2+) contacts are provided by Asp-8 and Glu-57.

Belongs to the P-Pant transferase superfamily. AcpS family. Requires Mg(2+) as cofactor.

It localises to the cytoplasm. It catalyses the reaction apo-[ACP] + CoA = holo-[ACP] + adenosine 3',5'-bisphosphate + H(+). Its function is as follows. Transfers the 4'-phosphopantetheine moiety from coenzyme A to a Ser of acyl-carrier-protein. In Nitrosomonas eutropha (strain DSM 101675 / C91 / Nm57), this protein is Holo-[acyl-carrier-protein] synthase.